A 456-amino-acid polypeptide reads, in one-letter code: Phospholipase A1 member A (456 aa).

The first 25 residues, 1–25 (MPPDFWERCFWLWGLLLWLSVGSTG), serve as a signal peptide directing secretion. The N-linked (GlcNAc...) asparagine glycan is linked to N34. Residue S166 is the Nucleophile of the active site. The active-site Charge relay system is the D190. C245 and C258 are oxidised to a cystine. Catalysis depends on H260, which acts as the Charge relay system. Disulfide bonds link C282–C293 and C296–C304.

This sequence belongs to the AB hydrolase superfamily. Lipase family.

It localises to the secreted. The catalysed reaction is a 1,2-diacyl-sn-glycero-3-phospho-L-serine + H2O = a 2-acyl-sn-glycero-3-phospho-L-serine + a fatty acid + H(+). It carries out the reaction 1,2-di-(9Z)-octadecenoyl-sn-glycero-3-phospho-L-serine + H2O = 2-(9Z-octadecenoyl)-sn-glycero-3-phospho-L-serine + (9Z)-octadecenoate + H(+). The enzyme catalyses 1-hexadecanoyl-2-(5Z,8Z,11Z,14Z-eicosatetraenoyl)-sn-glycero-3-phospho-L-serine + H2O = 2-(5Z,8Z,11Z,14Z)-eicosatetraenoyl-sn-glycero-3-phospho-L-serine + hexadecanoate + H(+). It catalyses the reaction a 1-acyl-sn-glycero-3-phospho-L-serine + H2O = sn-glycero-3-phospho-L-serine + a fatty acid + H(+). The catalysed reaction is 1-(9Z-octadecenoyl)-sn-glycero-3-phospho-L-serine + H2O = sn-glycero-3-phospho-L-serine + (9Z)-octadecenoate + H(+). In terms of biological role, hydrolyzes the ester bond of the acyl group attached at the sn-1 position of phosphatidylserines (phospholipase A1 activity) and 1-acyl-2-lysophosphatidylserines (lysophospholipase activity) in the pathway of phosphatidylserines acyl chain remodeling. Cleaves phosphatidylserines exposed on the outer leaflet of the plasma membrane of apoptotic cells producing 2-acyl-1-lysophosphatidylserines, which in turn enhance mast cell activation and histamine production. Has no activity toward other glycerophospholipids including phosphatidylcholines, phosphatidylethanolamines, phosphatidic acids or phosphatidylinositols, or glycerolipids such as triolein. This chain is Phospholipase A1 member A (PLA1A), found in Bos taurus (Bovine).